Here is a 289-residue protein sequence, read N- to C-terminus: 4-hydroxy-tetrahydrodipicolinate synthase (289 aa).

Threonine 43 contributes to the pyruvate binding site. Residue tyrosine 131 is the Proton donor/acceptor of the active site. Lysine 160 acts as the Schiff-base intermediate with substrate in catalysis. Residue valine 200 participates in pyruvate binding.

Belongs to the DapA family. In terms of assembly, homotetramer; dimer of dimers.

It localises to the cytoplasm. The enzyme catalyses L-aspartate 4-semialdehyde + pyruvate = (2S,4S)-4-hydroxy-2,3,4,5-tetrahydrodipicolinate + H2O + H(+). It functions in the pathway amino-acid biosynthesis; L-lysine biosynthesis via DAP pathway; (S)-tetrahydrodipicolinate from L-aspartate: step 3/4. In terms of biological role, catalyzes the condensation of (S)-aspartate-beta-semialdehyde [(S)-ASA] and pyruvate to 4-hydroxy-tetrahydrodipicolinate (HTPA). The protein is 4-hydroxy-tetrahydrodipicolinate synthase of Methanococcus maripaludis (strain C5 / ATCC BAA-1333).